Consider the following 212-residue polypeptide: MKLNKKGLLIVLSGPSGVGKATVRKALFEMTNHNFVYSVSATTRKPRPGEQDGKDYHFLTKEEFEKGIENNCFLEWAKFIDHYYGTPKKQIQDFLKQGKEVFLEIEVEGATHLRKKRIPNTVFIFLVPPEKKALYDRLKKRGTEQEANIAKRIAKANNEFHLAHKYDYIVVNDEVANAADRIIAIIRAEHAKTKRSIRNYLKILEDNGYAEQ.

Residues 7–187 form the Guanylate kinase-like domain; that stretch reads GLLIVLSGPS…AADRIIAIIR (181 aa). 14–21 provides a ligand contact to ATP; it reads GPSGVGKA.

This sequence belongs to the guanylate kinase family.

The protein localises to the cytoplasm. It carries out the reaction GMP + ATP = GDP + ADP. Functionally, essential for recycling GMP and indirectly, cGMP. This is Guanylate kinase from Onion yellows phytoplasma (strain OY-M).